An 89-amino-acid chain; its full sequence is Elongation factor 1-beta (89 aa).

This sequence belongs to the EF-1-beta/EF-1-delta family.

Promotes the exchange of GDP for GTP in EF-1-alpha/GDP, thus allowing the regeneration of EF-1-alpha/GTP that could then be used to form the ternary complex EF-1-alpha/GTP/AAtRNA. The sequence is that of Elongation factor 1-beta from Methanococcus maripaludis (strain C5 / ATCC BAA-1333).